A 429-amino-acid chain; its full sequence is Enolase (429 aa).

Gln163 serves as a coordination point for (2R)-2-phosphoglycerate. The active-site Proton donor is the Glu205. Mg(2+) contacts are provided by Asp242, Glu286, and Asp313. Residues Lys338, Arg367, Ser368, and Lys389 each coordinate (2R)-2-phosphoglycerate. The active-site Proton acceptor is Lys338.

The protein belongs to the enolase family. Mg(2+) serves as cofactor.

The protein localises to the cytoplasm. Its subcellular location is the secreted. The protein resides in the cell surface. It carries out the reaction (2R)-2-phosphoglycerate = phosphoenolpyruvate + H2O. Its pathway is carbohydrate degradation; glycolysis; pyruvate from D-glyceraldehyde 3-phosphate: step 4/5. Catalyzes the reversible conversion of 2-phosphoglycerate (2-PG) into phosphoenolpyruvate (PEP). It is essential for the degradation of carbohydrates via glycolysis. The polypeptide is Enolase (Pelobacter propionicus (strain DSM 2379 / NBRC 103807 / OttBd1)).